Here is a 142-residue protein sequence, read N- to C-terminus: Cytidine deaminase (142 aa).

The CMP/dCMP-type deaminase domain occupies 9–139 (RQLEALKRAA…ELLPMAFGPS (131 aa)). 50–52 (NVE) is a binding site for substrate. Zn(2+) is bound at residue Cys-61. Glu-63 (proton donor) is an active-site residue. Residues Cys-96 and Cys-99 each contribute to the Zn(2+) site.

This sequence belongs to the cytidine and deoxycytidylate deaminase family. Homodimer. Requires Zn(2+) as cofactor.

The catalysed reaction is cytidine + H2O + H(+) = uridine + NH4(+). It catalyses the reaction 2'-deoxycytidine + H2O + H(+) = 2'-deoxyuridine + NH4(+). Its function is as follows. This enzyme scavenges exogenous and endogenous cytidine and 2'-deoxycytidine for UMP synthesis. This Saccharomyces cerevisiae (strain ATCC 204508 / S288c) (Baker's yeast) protein is Cytidine deaminase (CDD1).